The chain runs to 114 residues: Protein E7 (114 aa).

Positions 1–43 (MRGNSVDLQEIVLVQQGEVPENAAVHSGEHSDDEGESEEEERE) are E7 terminal domain. The interval 17 to 49 (GEVPENAAVHSGEHSDDEGESEEEEREQVQQVP) is disordered. Acidic residues predominate over residues 31–42 (SDDEGESEEEER). Residues 62–99 (CPFCQAIIRFVCVASNTGIRNLQALLVNSHLDLACHAC) fold into a zinc finger. A Nuclear export signal motif is present at residues 80–88 (IRNLQALLV).

It belongs to the papillomaviridae E7 protein family. In terms of assembly, homodimer. Homooligomer. Interacts with host RB1; this interaction induces dissociation of RB1-E2F1 complex thereby disrupting RB1 activity. Interacts with host EP300; this interaction represses EP300 transcriptional activity. Interacts with protein E2; this interaction inhibits E7 oncogenic activity. Interacts with host TMEM173/STING; this interaction impairs the ability of TMEM173/STING to sense cytosolic DNA and promote the production of type I interferon (IFN-alpha and IFN-beta). Highly phosphorylated.

The protein localises to the host cytoplasm. Its subcellular location is the host nucleus. Functionally, plays a role in viral genome replication by driving entry of quiescent cells into the cell cycle. Stimulation of progression from G1 to S phase allows the virus to efficiently use the cellular DNA replicating machinery to achieve viral genome replication. E7 protein has both transforming and trans-activating activities. Induces the disassembly of the E2F1 transcription factor from RB1, with subsequent transcriptional activation of E2F1-regulated S-phase genes. Interferes with host histone deacetylation mediated by HDAC1 and HDAC2, leading to transcription activation. Also plays a role in the inhibition of both antiviral and antiproliferative functions of host interferon alpha. Interaction with host TMEM173/STING impairs the ability of TMEM173/STING to sense cytosolic DNA and promote the production of type I interferon (IFN-alpha and IFN-beta). In Human papillomavirus type 41, this protein is Protein E7.